A 103-amino-acid chain; its full sequence is Cytochrome c-552 (103 aa).

A signal peptide spans 1-22 (MKTAWLGTFAASALLVAGYAQA). Residues Cys32, Cys35, His36, and Met81 each contribute to the heme c site.

In terms of assembly, monomer. Binds 1 heme c group covalently per subunit.

It localises to the periplasm. Its function is as follows. Monoheme c-type cytochrome. Probable electron donor to membrane cytochrome oxidase and to periplasmic nitrite reductase. This is Cytochrome c-552 (cyt) from Nitrosomonas europaea (strain ATCC 19718 / CIP 103999 / KCTC 2705 / NBRC 14298).